The sequence spans 54 residues: Large ribosomal subunit protein bL33 (54 aa).

It belongs to the bacterial ribosomal protein bL33 family.

In Caldicellulosiruptor saccharolyticus (strain ATCC 43494 / DSM 8903 / Tp8T 6331), this protein is Large ribosomal subunit protein bL33.